A 500-amino-acid chain; its full sequence is Lysine--tRNA ligase (500 aa).

Mg(2+) is bound by residues glutamate 410 and glutamate 417.

It belongs to the class-II aminoacyl-tRNA synthetase family. Homodimer. Requires Mg(2+) as cofactor.

It is found in the cytoplasm. It carries out the reaction tRNA(Lys) + L-lysine + ATP = L-lysyl-tRNA(Lys) + AMP + diphosphate. The sequence is that of Lysine--tRNA ligase from Shewanella piezotolerans (strain WP3 / JCM 13877).